The chain runs to 1392 residues: ATP-dependent helicase/nuclease subunit A (1392 aa).

Positions 3–489 (NPKWTPAQQA…IDLNQNFRSR (487 aa)) constitute a UvrD-like helicase ATP-binding domain. 24–31 (AAAGSGKT) serves as a coordination point for ATP. 3 disordered regions span residues 291–319 (RGSKKNLPDSLIDEENSKRLREESKKARD), 556–594 (RGAEDAATGADSPAKGEGEEFEQNREPESGDDESSLEEA), and 1051–1126 (GPVQ…LDTK). 2 stretches are compositionally biased toward basic and acidic residues: residues 305-319 (ENSKRLREESKKARD) and 569-583 (AKGEGEEFEQNREPE). The UvrD-like helicase C-terminal domain maps to 556-886 (RGAEDAATGA…RFITVHSSKG (331 aa)). Over residues 584–594 (SGDDESSLEEA) the composition is skewed to acidic residues. Residues 1088 to 1113 (ASGKTEIPGETKNSEETKTSEDKKNL) are compositionally biased toward basic and acidic residues.

Belongs to the helicase family. AddA subfamily. As to quaternary structure, heterodimer of AddA and AddB/RexB. It depends on Mg(2+) as a cofactor.

It catalyses the reaction Couples ATP hydrolysis with the unwinding of duplex DNA by translocating in the 3'-5' direction.. It carries out the reaction ATP + H2O = ADP + phosphate + H(+). In terms of biological role, the heterodimer acts as both an ATP-dependent DNA helicase and an ATP-dependent, dual-direction single-stranded exonuclease. Recognizes the chi site generating a DNA molecule suitable for the initiation of homologous recombination. The AddA nuclease domain is required for chi fragment generation; this subunit has the helicase and 3' -&gt; 5' nuclease activities. In Desulfitobacterium hafniense (strain Y51), this protein is ATP-dependent helicase/nuclease subunit A.